Consider the following 906-residue polypeptide: Protein translocase subunit SecA (906 aa).

ATP is bound by residues Q86, 104 to 108 (GEGKT), and D511. Basic and acidic residues-rich tracts occupy residues 853–865 (HESV…RHDE) and 877–888 (VRREGPKVKRND). The disordered stretch occupies residues 853–906 (HESVIDNNQRHDEDEQEEAPKVQQVRREGPKVKRNDPCPCGSGKKYKQCHGKVE). C890, C892, C901, and H902 together coordinate Zn(2+). Basic residues predominate over residues 896 to 906 (KKYKQCHGKVE).

It belongs to the SecA family. Monomer and homodimer. Part of the essential Sec protein translocation apparatus which comprises SecA, SecYEG and auxiliary proteins SecDF-YajC and YidC. Requires Zn(2+) as cofactor.

It localises to the cell inner membrane. The protein localises to the cytoplasm. The enzyme catalyses ATP + H2O + cellular proteinSide 1 = ADP + phosphate + cellular proteinSide 2.. Its function is as follows. Part of the Sec protein translocase complex. Interacts with the SecYEG preprotein conducting channel. Has a central role in coupling the hydrolysis of ATP to the transfer of proteins into and across the cell membrane, serving both as a receptor for the preprotein-SecB complex and as an ATP-driven molecular motor driving the stepwise translocation of polypeptide chains across the membrane. The chain is Protein translocase subunit SecA from Francisella tularensis subsp. holarctica (strain FTNF002-00 / FTA).